We begin with the raw amino-acid sequence, 366 residues long: D-alanine--D-alanine ligase A (366 aa).

Positions 145-348 (KRLLRDAGLK…YRELITALIE (204 aa)) constitute an ATP-grasp domain. Residue 175 to 230 (VEQLGLPLFVKPANQGSSVGVSKVKREADLRAALDEAFRYDHKVLVEQAVIGREIE) participates in ATP binding. Mg(2+) is bound by residues Asp-302, Glu-315, and Asn-317.

Belongs to the D-alanine--D-alanine ligase family. Requires Mg(2+) as cofactor. It depends on Mn(2+) as a cofactor.

It localises to the cytoplasm. It carries out the reaction 2 D-alanine + ATP = D-alanyl-D-alanine + ADP + phosphate + H(+). It participates in cell wall biogenesis; peptidoglycan biosynthesis. Cell wall formation. This is D-alanine--D-alanine ligase A from Chromobacterium violaceum (strain ATCC 12472 / DSM 30191 / JCM 1249 / CCUG 213 / NBRC 12614 / NCIMB 9131 / NCTC 9757 / MK).